A 248-amino-acid polypeptide reads, in one-letter code: MSDTVEELVQRAKLAEQAERYDDMAAAMKKVTEQGQELSNEERNLLSVAYKNVVGARRSSWRVISSIEQKTEGSEKKQQLAKEYRVKVEQELNDICQDVLKLLDEFLIVKAGAAESKVFYLKMKGDYYRYLAEVASEDRAAVVEKSQKAYQEALDIAKDKMQPTHPIRLGLALNFSVFYYEILNTPEHACQLAKQAFDDAIAELDTLNEDSYKDSTLIMQLLRDNLTLWTSDVGAEDQEQEGNQEAGN.

It belongs to the 14-3-3 family. As to quaternary structure, interacts with daf-16 and sir-2.1. Interacts with atgl-1. Interacts with hcf-1.

Its subcellular location is the cytoplasm. The protein localises to the nucleus. Functionally, required to modulate lifespan, in concert with hcf-1, acting redundantly with 14-3-3-like protein ftt-2. The sequence is that of 14-3-3-like protein 1 (par-5) from Caenorhabditis elegans.